The following is a 293-amino-acid chain: Elongation factor Ts (293 aa).

Positions T79–V82 are involved in Mg(2+) ion dislocation from EF-Tu.

This sequence belongs to the EF-Ts family.

Its subcellular location is the cytoplasm. Its function is as follows. Associates with the EF-Tu.GDP complex and induces the exchange of GDP to GTP. It remains bound to the aminoacyl-tRNA.EF-Tu.GTP complex up to the GTP hydrolysis stage on the ribosome. The polypeptide is Elongation factor Ts (Bacillus velezensis (strain DSM 23117 / BGSC 10A6 / LMG 26770 / FZB42) (Bacillus amyloliquefaciens subsp. plantarum)).